The chain runs to 199 residues: uncharacterized protein (199 aa).

A signal peptide spans 1–23; that stretch reads MKPGCTLFFLLCSALTVTTEAHA.

This is an uncharacterized protein from Escherichia coli (strain K12).